Reading from the N-terminus, the 290-residue chain is Ribosomal RNA small subunit methyltransferase A (290 aa).

Residues asparagine 27, leucine 29, glycine 54, glutamate 75, aspartate 100, and asparagine 125 each coordinate S-adenosyl-L-methionine.

It belongs to the class I-like SAM-binding methyltransferase superfamily. rRNA adenine N(6)-methyltransferase family. RsmA subfamily.

The protein localises to the cytoplasm. It carries out the reaction adenosine(1518)/adenosine(1519) in 16S rRNA + 4 S-adenosyl-L-methionine = N(6)-dimethyladenosine(1518)/N(6)-dimethyladenosine(1519) in 16S rRNA + 4 S-adenosyl-L-homocysteine + 4 H(+). Its function is as follows. Specifically dimethylates two adjacent adenosines (A1518 and A1519) in the loop of a conserved hairpin near the 3'-end of 16S rRNA in the 30S particle. May play a critical role in biogenesis of 30S subunits. This is Ribosomal RNA small subunit methyltransferase A from Streptococcus equi subsp. zooepidemicus (strain H70).